The chain runs to 340 residues: Uroporphyrinogen decarboxylase (340 aa).

Substrate-binding positions include 21–25 (RQAGR), Asp71, Tyr147, Ser202, and His315.

This sequence belongs to the uroporphyrinogen decarboxylase family. As to quaternary structure, homodimer.

The protein resides in the cytoplasm. The enzyme catalyses uroporphyrinogen III + 4 H(+) = coproporphyrinogen III + 4 CO2. It functions in the pathway porphyrin-containing compound metabolism; protoporphyrin-IX biosynthesis; coproporphyrinogen-III from 5-aminolevulinate: step 4/4. Its function is as follows. Catalyzes the decarboxylation of four acetate groups of uroporphyrinogen-III to yield coproporphyrinogen-III. The protein is Uroporphyrinogen decarboxylase of Nautilia profundicola (strain ATCC BAA-1463 / DSM 18972 / AmH).